The following is a 319-amino-acid chain: Ester hydrolase C11orf54 homolog (319 aa).

Residues His-270, His-272, and His-282 each contribute to the Zn(2+) site.

As to quaternary structure, monomer. It depends on Zn(2+) as a cofactor.

The protein localises to the nucleus. The protein resides in the cytoplasm. Its function is as follows. Exhibits ester hydrolase activity on the substrate p-nitrophenyl acetate, in vitro. May regulate DNA damage and repair by regulating HIF1A degradation via chaperone-mediated autophagy (CMA). This Danio rerio (Zebrafish) protein is Ester hydrolase C11orf54 homolog.